The following is a 330-amino-acid chain: Type I restriction enzyme MpnII specificity subunit (330 aa).

This sequence belongs to the type-I restriction system S methylase family. The methyltransferase is composed of M and S polypeptides.

Functionally, the specificity (S) subunit of a type I restriction enzyme; this subunit dictates DNA sequence specificity. The M and S subunits together form a methyltransferase (MTase) that probably methylates A-2 on the top strand and A-3 on the bottom strand of the sequence 5'-GAN(7)TAY-3'. As the bacterial DNA is methylated on this sequence and this is the only type I methylase in the genome, it is probably responsible for all of the methylation on this site in the genome. The R subunit has multiple frameshifts and is probably not expressed in this bacteria. The protein is Type I restriction enzyme MpnII specificity subunit of Mycoplasma pneumoniae (strain ATCC 29342 / M129 / Subtype 1) (Mycoplasmoides pneumoniae).